The sequence spans 921 residues: AdoMet-dependent rRNA methyltransferase SPB1 (921 aa).

The S-adenosyl-L-methionine site is built by Gly58, Trp60, Asp78, Asp94, and Asp119. The Proton acceptor role is filled by Lys159. Residues 367–414 (VEEMDEDDQIDDELARLNEEAARKARKERRRKNELRQKKILKMQLQMT) adopt a coiled-coil conformation. 5 disordered regions span residues 448–476 (ALIQ…DPET), 491–604 (EFKQ…KRSL), 635–713 (ELDE…GKQK), 814–835 (LEKA…EKEK), and 866–921 (RGLK…GPRN). Over residues 491–522 (EFKQKQSERDAKFRAKQARLQDAKNDSWHGIK) the composition is skewed to basic and acidic residues. Composition is skewed to acidic residues over residues 523–542 (DDEE…ESEG), 555–568 (ETFD…EEDE), 635–684 (ELDE…DDFE), and 697–708 (DEEWDLNGEDEE). A coiled-coil region spans residues 796 to 835 (IKKVAEAKARKKMRTLRRLEKAQKKAETINENEDISEKEK). Residues 814-823 (LEKAQKKAET) show a composition bias toward basic and acidic residues. A compositionally biased stretch (basic residues) spans 868–879 (LKGRPKGTKGRY). The segment covering 880–892 (KMVDPRMKKELRA) has biased composition (basic and acidic residues).

The protein belongs to the class I-like SAM-binding methyltransferase superfamily. RNA methyltransferase RlmE family. SPB1 subfamily. As to quaternary structure, component of the nucleolar and nucleoplasmic pre-60S ribosomal particle.

The protein localises to the nucleus. Its subcellular location is the nucleolus. It catalyses the reaction a ribonucleotide in rRNA + S-adenosyl-L-methionine = a 2'-O-methylribonucleotide in rRNA + S-adenosyl-L-homocysteine + H(+). Functionally, required for proper assembly of pre-ribosomal particles during the biogenesis of the 60S ribosomal subunit. In Mycosarcoma maydis (Corn smut fungus), this protein is AdoMet-dependent rRNA methyltransferase SPB1.